The following is a 303-amino-acid chain: GPN-loop GTPase 2 (303 aa).

29–34 (GSGKST) provides a ligand contact to GTP. Residues 85–87 (GPN) carry the Gly-Pro-Asn (GPN)-loop; involved in dimer interface motif. 187-190 (SKMD) provides a ligand contact to GTP.

It belongs to the GPN-loop GTPase family. In terms of assembly, heterodimers with gpn1 or gpn3. Binds to RNA polymerase II (RNAPII).

In terms of biological role, small GTPase required for proper localization of RNA polymerase II and III (RNAPII and RNAPIII). May act at an RNAP assembly step prior to nuclear import. The protein is GPN-loop GTPase 2 of Xenopus tropicalis (Western clawed frog).